Consider the following 344-residue polypeptide: Heat-inducible transcription repressor HrcA (344 aa).

The protein belongs to the HrcA family.

Its function is as follows. Negative regulator of class I heat shock genes (grpE-dnaK-dnaJ and groELS operons). Prevents heat-shock induction of these operons. The protein is Heat-inducible transcription repressor HrcA of Streptococcus pneumoniae (strain ATCC 700669 / Spain 23F-1).